The primary structure comprises 671 residues: DNA ligase (671 aa).

NAD(+) is bound by residues 34-38, 83-84, and Glu115; these read DAEYD and SL. Catalysis depends on Lys117, which acts as the N6-AMP-lysine intermediate. Positions 138, 174, 291, and 315 each coordinate NAD(+). Zn(2+) contacts are provided by Cys409, Cys412, Cys427, and Cys432. The region spanning 589–671 is the BRCT domain; that stretch reads RSGGPLTGKS…LQMIDTLEEA (83 aa).

This sequence belongs to the NAD-dependent DNA ligase family. LigA subfamily. Mg(2+) serves as cofactor. The cofactor is Mn(2+).

It carries out the reaction NAD(+) + (deoxyribonucleotide)n-3'-hydroxyl + 5'-phospho-(deoxyribonucleotide)m = (deoxyribonucleotide)n+m + AMP + beta-nicotinamide D-nucleotide.. In terms of biological role, DNA ligase that catalyzes the formation of phosphodiester linkages between 5'-phosphoryl and 3'-hydroxyl groups in double-stranded DNA using NAD as a coenzyme and as the energy source for the reaction. It is essential for DNA replication and repair of damaged DNA. The sequence is that of DNA ligase from Syntrophotalea carbinolica (strain DSM 2380 / NBRC 103641 / GraBd1) (Pelobacter carbinolicus).